A 223-amino-acid chain; its full sequence is Deoxyribose-phosphate aldolase (223 aa).

D91 serves as the catalytic Proton donor/acceptor. K153 functions as the Schiff-base intermediate with acetaldehyde in the catalytic mechanism. K182 acts as the Proton donor/acceptor in catalysis.

Belongs to the DeoC/FbaB aldolase family. DeoC type 1 subfamily.

The protein localises to the cytoplasm. The enzyme catalyses 2-deoxy-D-ribose 5-phosphate = D-glyceraldehyde 3-phosphate + acetaldehyde. It functions in the pathway carbohydrate degradation; 2-deoxy-D-ribose 1-phosphate degradation; D-glyceraldehyde 3-phosphate and acetaldehyde from 2-deoxy-alpha-D-ribose 1-phosphate: step 2/2. In terms of biological role, catalyzes a reversible aldol reaction between acetaldehyde and D-glyceraldehyde 3-phosphate to generate 2-deoxy-D-ribose 5-phosphate. The protein is Deoxyribose-phosphate aldolase of Streptococcus pyogenes serotype M3 (strain ATCC BAA-595 / MGAS315).